Here is a 689-residue protein sequence, read N- to C-terminus: Glycine--tRNA ligase beta subunit (689 aa).

The protein belongs to the class-II aminoacyl-tRNA synthetase family. In terms of assembly, tetramer of two alpha and two beta subunits.

Its subcellular location is the cytoplasm. It catalyses the reaction tRNA(Gly) + glycine + ATP = glycyl-tRNA(Gly) + AMP + diphosphate. The polypeptide is Glycine--tRNA ligase beta subunit (Salmonella schwarzengrund (strain CVM19633)).